The chain runs to 297 residues: ATP synthase subunit gamma, mitochondrial (297 aa).

The protein belongs to the ATPase gamma chain family. F-type ATPases have 2 components, CF(1) - the catalytic core - and CF(0) - the membrane proton channel. CF(1) has five subunits: alpha(3), beta(3), gamma(1), delta(1), epsilon(1). CF(0) has three main subunits: a, b and c.

Its subcellular location is the mitochondrion. It localises to the mitochondrion inner membrane. Its function is as follows. Mitochondrial membrane ATP synthase (F(1)F(0) ATP synthase or Complex V) produces ATP from ADP in the presence of a proton gradient across the membrane which is generated by electron transport complexes of the respiratory chain. F-type ATPases consist of two structural domains, F(1) - containing the extramembraneous catalytic core, and F(0) - containing the membrane proton channel, linked together by a central stalk and a peripheral stalk. During catalysis, ATP synthesis in the catalytic domain of F(1) is coupled via a rotary mechanism of the central stalk subunits to proton translocation. Part of the complex F(1) domain and the central stalk which is part of the complex rotary element. The gamma subunit protrudes into the catalytic domain formed of alpha(3)beta(3). Rotation of the central stalk against the surrounding alpha(3)beta(3) subunits leads to hydrolysis of ATP in three separate catalytic sites on the beta subunits. In Drosophila melanogaster (Fruit fly), this protein is ATP synthase subunit gamma, mitochondrial.